Consider the following 467-residue polypeptide: ATP synthase subunit beta (467 aa).

152-159 (GGAGVGKT) contributes to the ATP binding site.

Belongs to the ATPase alpha/beta chains family. F-type ATPases have 2 components, CF(1) - the catalytic core - and CF(0) - the membrane proton channel. CF(1) has five subunits: alpha(3), beta(3), gamma(1), delta(1), epsilon(1). CF(0) has three main subunits: a(1), b(2) and c(9-12). The alpha and beta chains form an alternating ring which encloses part of the gamma chain. CF(1) is attached to CF(0) by a central stalk formed by the gamma and epsilon chains, while a peripheral stalk is formed by the delta and b chains.

Its subcellular location is the cell membrane. It catalyses the reaction ATP + H2O + 4 H(+)(in) = ADP + phosphate + 5 H(+)(out). Its function is as follows. Produces ATP from ADP in the presence of a proton gradient across the membrane. The catalytic sites are hosted primarily by the beta subunits. This Caldicellulosiruptor saccharolyticus (strain ATCC 43494 / DSM 8903 / Tp8T 6331) protein is ATP synthase subunit beta.